The following is a 325-amino-acid chain: Undecaprenyl-phosphate 4-deoxy-4-formamido-L-arabinose transferase (325 aa).

The next 2 membrane-spanning stretches (helical) occupy residues 234–254 (LLSV…LLLI) and 269–289 (VFML…GMGL).

It belongs to the glycosyltransferase 2 family.

The protein resides in the cell inner membrane. It carries out the reaction UDP-4-deoxy-4-formamido-beta-L-arabinose + di-trans,octa-cis-undecaprenyl phosphate = 4-deoxy-4-formamido-alpha-L-arabinopyranosyl di-trans,octa-cis-undecaprenyl phosphate + UDP. It functions in the pathway glycolipid biosynthesis; 4-amino-4-deoxy-alpha-L-arabinose undecaprenyl phosphate biosynthesis; 4-amino-4-deoxy-alpha-L-arabinose undecaprenyl phosphate from UDP-4-deoxy-4-formamido-beta-L-arabinose and undecaprenyl phosphate: step 1/2. Its pathway is bacterial outer membrane biogenesis; lipopolysaccharide biosynthesis. Catalyzes the transfer of 4-deoxy-4-formamido-L-arabinose from UDP to undecaprenyl phosphate. The modified arabinose is attached to lipid A and is required for resistance to polymyxin and cationic antimicrobial peptides. The protein is Undecaprenyl-phosphate 4-deoxy-4-formamido-L-arabinose transferase of Erwinia tasmaniensis (strain DSM 17950 / CFBP 7177 / CIP 109463 / NCPPB 4357 / Et1/99).